The chain runs to 373 residues: Malate dehydrogenase, mitochondrial (373 aa).

NAD(+)-binding positions include 69–75 and D95; that span reads GAAGGIG. Residues R141 and R147 each coordinate substrate. NAD(+) contacts are provided by residues N154 and 177–179; that span reads ISN. Residues N179 and R213 each contribute to the substrate site. H237 serves as the catalytic Proton acceptor. M288 is an NAD(+) binding site.

It belongs to the LDH/MDH superfamily. MDH type 1 family. In terms of assembly, homodimer.

The protein localises to the mitochondrion matrix. The enzyme catalyses (S)-malate + NAD(+) = oxaloacetate + NADH + H(+). The sequence is that of Malate dehydrogenase, mitochondrial from Chlamydomonas reinhardtii (Chlamydomonas smithii).